Here is a 545-residue protein sequence, read N- to C-terminus: MAKIIAFDEEARRGLERGLNILADAVKVTLGPRGRNVVLEKKWGAPTITNDGVSIAKEIELDDPYEKIGAELVKEVAKKTDDVAGDGTTTATVLAQALVKEGLRNVAAGADPLSLKRGIEKAVEAVTAELLASAKEIETKEEIAATASISAGDDEIGALIAEALDKVGKEGVITVEESNTFGLELELTEGMRFDKGYISAYFVTDAERQETVLEDPYILIVNSKISNVKELVAVLEKVMQSNKPLLIIAEDIEGEALATLIVNKIRGTFKSVAVKAPGFGDRRKAQLADIAILTGGQVISEEVGLKLETAGLELLGKARKVVVTKDETTIVEGAGDADQIAGRVSQIRSEIENSDSDYDREKLQERLAKLAGGVAVIKAGAATEVELKERKHRIEDAVRNAKAAVEEGIVAGGGVALIQAGAKAFANLQLEGDEATGANIVRVAIDAPLKQIAFNAGLEPGVVVDKVRGLPAGHGLNAATGQYVDLLAAGINDPVKVTRSALQNAASIAGLFLTTEAVVADKPEKNAPAMGGGDDMGGMGGMGGF.

ATP-binding positions include 29–32 (TLGP), 86–90 (DGTTT), glycine 413, 477–479 (NAA), and aspartate 493.

It belongs to the chaperonin (HSP60) family. As to quaternary structure, forms a cylinder of 14 subunits composed of two heptameric rings stacked back-to-back. Interacts with the co-chaperonin GroES.

The protein resides in the cytoplasm. The enzyme catalyses ATP + H2O + a folded polypeptide = ADP + phosphate + an unfolded polypeptide.. Functionally, together with its co-chaperonin GroES, plays an essential role in assisting protein folding. The GroEL-GroES system forms a nano-cage that allows encapsulation of the non-native substrate proteins and provides a physical environment optimized to promote and accelerate protein folding. This chain is Chaperonin GroEL 1, found in Arthrobacter sp. (strain FB24).